The chain runs to 189 residues: Crossover junction endodeoxyribonuclease RuvC (189 aa).

Residues D11, E71, and D143 contribute to the active site. 3 residues coordinate Mg(2+): D11, E71, and D143.

The protein belongs to the RuvC family. Homodimer which binds Holliday junction (HJ) DNA. The HJ becomes 2-fold symmetrical on binding to RuvC with unstacked arms; it has a different conformation from HJ DNA in complex with RuvA. In the full resolvosome a probable DNA-RuvA(4)-RuvB(12)-RuvC(2) complex forms which resolves the HJ. Mg(2+) is required as a cofactor.

The protein resides in the cytoplasm. It catalyses the reaction Endonucleolytic cleavage at a junction such as a reciprocal single-stranded crossover between two homologous DNA duplexes (Holliday junction).. In terms of biological role, the RuvA-RuvB-RuvC complex processes Holliday junction (HJ) DNA during genetic recombination and DNA repair. Endonuclease that resolves HJ intermediates. Cleaves cruciform DNA by making single-stranded nicks across the HJ at symmetrical positions within the homologous arms, yielding a 5'-phosphate and a 3'-hydroxyl group; requires a central core of homology in the junction. The consensus cleavage sequence is 5'-(A/T)TT(C/G)-3'. Cleavage occurs on the 3'-side of the TT dinucleotide at the point of strand exchange. HJ branch migration catalyzed by RuvA-RuvB allows RuvC to scan DNA until it finds its consensus sequence, where it cleaves and resolves the cruciform DNA. The polypeptide is Crossover junction endodeoxyribonuclease RuvC (Methylorubrum extorquens (strain CM4 / NCIMB 13688) (Methylobacterium extorquens)).